We begin with the raw amino-acid sequence, 145 residues long: D-aminoacyl-tRNA deacylase (145 aa).

The Gly-cisPro motif, important for rejection of L-amino acids signature appears at 137-138 (GP).

This sequence belongs to the DTD family. In terms of assembly, homodimer.

The protein resides in the cytoplasm. The catalysed reaction is glycyl-tRNA(Ala) + H2O = tRNA(Ala) + glycine + H(+). The enzyme catalyses a D-aminoacyl-tRNA + H2O = a tRNA + a D-alpha-amino acid + H(+). An aminoacyl-tRNA editing enzyme that deacylates mischarged D-aminoacyl-tRNAs. Also deacylates mischarged glycyl-tRNA(Ala), protecting cells against glycine mischarging by AlaRS. Acts via tRNA-based rather than protein-based catalysis; rejects L-amino acids rather than detecting D-amino acids in the active site. By recycling D-aminoacyl-tRNA to D-amino acids and free tRNA molecules, this enzyme counteracts the toxicity associated with the formation of D-aminoacyl-tRNA entities in vivo and helps enforce protein L-homochirality. The sequence is that of D-aminoacyl-tRNA deacylase from Salmonella arizonae (strain ATCC BAA-731 / CDC346-86 / RSK2980).